Reading from the N-terminus, the 745-residue chain is uncharacterized protein (745 aa).

In terms of domain architecture, HTH araC/xylS-type spans 158 to 256; the sequence is NQVCDYIELH…HQTPKQYRGD (99 aa). DNA-binding regions (H-T-H motif) lie at residues 175–196 and 223–246; these read SELS…AESL and ITDI…KHIT.

This is an uncharacterized protein from Staphylococcus aureus.